Reading from the N-terminus, the 478-residue chain is Tubulin gamma chain (478 aa).

141–147 (AGGTGSG) contacts GTP. The disordered stretch occupies residues 451-478 (ISQKESSSLANENGNGANNKPGKSAMAL). Residues 459–468 (LANENGNGAN) are compositionally biased toward polar residues.

It belongs to the tubulin family.

It localises to the cytoplasm. The protein localises to the cytoskeleton. It is found in the microtubule organizing center. The protein resides in the centrosome. Its function is as follows. Tubulin is the major constituent of microtubules. The gamma chain is found at microtubule organizing centers (MTOC) such as the spindle poles or the centrosome, suggesting that it is involved in the minus-end nucleation of microtubule assembly. This chain is Tubulin gamma chain, found in Reticulomyxa filosa.